The sequence spans 396 residues: Elongation factor Tu 2 (396 aa).

The tr-type G domain occupies 10-206; the sequence is KPHVNIGTIG…AVDEYIPTPE (197 aa). The G1 stretch occupies residues 19–26; sequence GHVDHGKT. 19-26 is a binding site for GTP; the sequence is GHVDHGKT. T26 serves as a coordination point for Mg(2+). Residues 60-64 are G2; the sequence is GITIN. Positions 81 to 84 are G3; the sequence is DCPG. GTP-binding positions include 81-85 and 136-139; these read DCPGH and NKVD. Positions 136-139 are G4; sequence NKVD. Residues 174-176 form a G5 region; sequence SAL.

Belongs to the TRAFAC class translation factor GTPase superfamily. Classic translation factor GTPase family. EF-Tu/EF-1A subfamily. Monomer.

The protein localises to the cytoplasm. It catalyses the reaction GTP + H2O = GDP + phosphate + H(+). In terms of biological role, GTP hydrolase that promotes the GTP-dependent binding of aminoacyl-tRNA to the A-site of ribosomes during protein biosynthesis. In Hyphomonas neptunium (strain ATCC 15444), this protein is Elongation factor Tu 2.